The sequence spans 350 residues: Ferredoxin--NADP reductase (350 aa).

FAD contacts are provided by Thr-14, Asp-33, Gln-41, Tyr-46, Ala-86, Phe-121, Asp-286, and Thr-327.

Belongs to the ferredoxin--NADP reductase type 2 family. In terms of assembly, homodimer. Requires FAD as cofactor.

The catalysed reaction is 2 reduced [2Fe-2S]-[ferredoxin] + NADP(+) + H(+) = 2 oxidized [2Fe-2S]-[ferredoxin] + NADPH. This Flavobacterium johnsoniae (strain ATCC 17061 / DSM 2064 / JCM 8514 / BCRC 14874 / CCUG 350202 / NBRC 14942 / NCIMB 11054 / UW101) (Cytophaga johnsonae) protein is Ferredoxin--NADP reductase.